Here is a 292-residue protein sequence, read N- to C-terminus: Acetylglutamate kinase (292 aa).

Substrate is bound by residues 62–63 (GG), Arg-84, and Asn-188.

The protein belongs to the acetylglutamate kinase family. ArgB subfamily.

It is found in the cytoplasm. It catalyses the reaction N-acetyl-L-glutamate + ATP = N-acetyl-L-glutamyl 5-phosphate + ADP. Its pathway is amino-acid biosynthesis; L-arginine biosynthesis; N(2)-acetyl-L-ornithine from L-glutamate: step 2/4. In terms of biological role, catalyzes the ATP-dependent phosphorylation of N-acetyl-L-glutamate. In Methanosarcina mazei (strain ATCC BAA-159 / DSM 3647 / Goe1 / Go1 / JCM 11833 / OCM 88) (Methanosarcina frisia), this protein is Acetylglutamate kinase.